Consider the following 107-residue polypeptide: Glutaredoxin 4 (107 aa).

In terms of domain architecture, Glutaredoxin spans 4 to 106; it reads LDKIKKQISE…TLLAEVAAKH (103 aa). Glutathione is bound at residue Lys21. Cys29 provides a ligand contact to [2Fe-2S] cluster. Glutathione contacts are provided by residues Arg58, Phe70, and 83-84; that span reads CD.

This sequence belongs to the glutaredoxin family. Monothiol subfamily. In terms of assembly, homodimer.

The protein resides in the cytoplasm. Its function is as follows. Monothiol glutaredoxin involved in the biogenesis of iron-sulfur clusters. This chain is Glutaredoxin 4 (grxD), found in Haemophilus influenzae (strain 86-028NP).